A 1381-amino-acid chain; its full sequence is Hepatocyte growth factor receptor (1381 aa).

The N-terminal stretch at 1 to 24 is a signal peptide; it reads MKAPAVLAPGILMLLFTLVQRSNG. The Extracellular portion of the chain corresponds to 25–932; that stretch reads ECKEALAKSE…VIVQPDQNFT (908 aa). The 489-residue stretch at 27–515 folds into the Sema domain; it reads KEALAKSEMN…TGKKITKIPL (489 aa). Residue Asn-45 is glycosylated (N-linked (GlcNAc...) asparagine). Disulfide bonds link Cys-95–Cys-101, Cys-98–Cys-160, Cys-133–Cys-141, and Cys-172–Cys-175. The N-linked (GlcNAc...) asparagine glycan is linked to Asn-106. Asn-149 is a glycosylation site (N-linked (GlcNAc...) asparagine). The N-linked (GlcNAc...) asparagine glycan is linked to Asn-202. Intrachain disulfides connect Cys-298/Cys-363 and Cys-385/Cys-397. 2 N-linked (GlcNAc...) asparagine glycosylation sites follow: Asn-399 and Asn-405. 4 cysteine pairs are disulfide-bonded: Cys-520–Cys-538, Cys-526–Cys-561, Cys-529–Cys-545, and Cys-541–Cys-551. 3 IPT/TIG domains span residues 563 to 655, 657 to 739, and 742 to 836; these read PAIY…FSYV, PIIT…FSYR, and PIVY…LIYV. Thr-582 carries an O-linked (Man) threonine glycan. N-linked (GlcNAc...) asparagine glycosylation is found at Asn-607 and Asn-635. O-linked (Man) threonine glycosylation is found at Thr-676 and Thr-761. N-linked (GlcNAc...) asparagine glycosylation is found at Asn-785, Asn-879, and Asn-930. A helical transmembrane segment spans residues 933–955; sequence GLIAGVVSISIALLLLLGLFLWL. Residues 956–1381 are Cytoplasmic-facing; it reads KKRKQIKDLG…EDNADDEVDT (426 aa). Residue Ser-966 is modified to Phosphoserine. Thr-977 is modified (phosphothreonine). Phosphoserine occurs at positions 990, 997, and 1000. Tyr-1003 bears the Phosphotyrosine mark. One can recognise a Protein kinase domain in the interval 1078–1345; sequence VHFNEVIGRG…RISAIFSTFI (268 aa). ATP is bound by residues 1084–1092 and Lys-1110; that span reads IGRGHFGCV. The active-site Proton acceptor is the Asp-1204. The segment at 1212-1381 is interaction with RANBP9; the sequence is LDEKFTVKVA…EDNADDEVDT (170 aa). Tyr-1230 bears the Phosphotyrosine mark. Residues Tyr-1234 and Tyr-1235 each carry the phosphotyrosine; by autocatalysis modification. Thr-1289 is subject to Phosphothreonine. Residues 1320-1359 form an interaction with MUC20 region; that stretch reads WHPKAEMRPSFSELVSRISAIFSTFIGEHYVHVNATYVNV. Phosphotyrosine; by autocatalysis occurs at positions 1349 and 1356. Tyr-1365 carries the phosphotyrosine modification.

It belongs to the protein kinase superfamily. Tyr protein kinase family. As to quaternary structure, heterodimer made of an alpha chain (50 kDa) and a beta chain (145 kDa) which are disulfide linked. Binds PLXNB1. Interacts when phosphorylated with downstream effectors including STAT3, PIK3R1, SRC, PCLG1, GRB2 and GAB1. Interacts with SPSB1, SPSB2 and SPSB4. Interacts with INPP5D/SHIP1. When phosphorylated at Tyr-1356, interacts with INPPL1/SHIP2. Interacts with RANBP9 and RANBP10, as well as SPSB1, SPSB2, SPSB3 and SPSB4. SPSB1 binding occurs in the presence and in the absence of HGF, however HGF treatment has a positive effect on this interaction. Interacts with MUC20; prevents interaction with GRB2 and suppresses hepatocyte growth factor-induced cell proliferation. Interacts with GRB10. Interacts with PTPN1 and PTPN2. Interacts with HSP90AA1 and HSP90AB1; the interaction suppresses MET kinase activity. Interacts with tensin TNS3. Interacts (when phosphorylated) with tensin TNS4 (via SH2 domain); the interaction increases MET protein stability by inhibiting MET endocytosis and subsequent lysosomal degradation. (Microbial infection) Immunoprecipitates with L.monocytogenes InlB. InlB probably dimerizes upon binding to MET, which encourages subsequent dimerization of MET. In terms of processing, autophosphorylated in response to ligand binding on Tyr-1234 and Tyr-1235 in the kinase domain leading to further phosphorylation of Tyr-1349 and Tyr-1356 in the C-terminal multifunctional docking site. Dephosphorylated by PTPRJ at Tyr-1349 and Tyr-1365. Dephosphorylated by PTPN1 and PTPN2. Post-translationally, ubiquitinated. Ubiquitination by CBL regulates the receptor stability and activity through proteasomal degradation. O-mannosylation of IPT/TIG domains by TMEM260 is required for protein maturation. O-mannosylated residues are composed of single mannose glycans that are not elongated or modified. In terms of processing, (Microbial infection) Tyrosine phosphorylation is stimulated by L.monocytogenes InlB.

It localises to the membrane. It carries out the reaction L-tyrosyl-[protein] + ATP = O-phospho-L-tyrosyl-[protein] + ADP + H(+). Its activity is regulated as follows. In its inactive state, the C-terminal tail interacts with the catalytic domain and inhibits the kinase activity. Upon ligand binding, the C-terminal tail is displaced and becomes phosphorylated, thus increasing the kinase activity. Its function is as follows. Receptor tyrosine kinase that transduces signals from the extracellular matrix into the cytoplasm by binding to hepatocyte growth factor/HGF ligand. Regulates many physiological processes including proliferation, scattering, morphogenesis and survival. Ligand binding at the cell surface induces autophosphorylation of MET on its intracellular domain that provides docking sites for downstream signaling molecules. Following activation by ligand, interacts with the PI3-kinase subunit PIK3R1, PLCG1, SRC, GRB2, STAT3 or the adapter GAB1. Recruitment of these downstream effectors by MET leads to the activation of several signaling cascades including the RAS-ERK, PI3 kinase-AKT, or PLCgamma-PKC. The RAS-ERK activation is associated with the morphogenetic effects while PI3K/AKT coordinates prosurvival effects. During embryonic development, MET signaling plays a role in gastrulation, development and migration of muscles and neuronal precursors, angiogenesis and kidney formation. In adults, participates in wound healing as well as organ regeneration and tissue remodeling. Also promotes differentiation and proliferation of hematopoietic cells. Functionally, (Microbial infection) Acts as a receptor for Listeria monocytogenes internalin InlB, mediating entry of the pathogen into cells. This chain is Hepatocyte growth factor receptor (MET), found in Chlorocebus aethiops (Green monkey).